Here is a 107-residue protein sequence, read N- to C-terminus: Iron-binding protein IscA (107 aa).

Fe cation is bound by residues C35, C99, and C101.

It belongs to the HesB/IscA family. In terms of assembly, homodimer; may form tetramers and higher multimers. Requires Fe cation as cofactor.

Is able to transfer iron-sulfur clusters to apo-ferredoxin. Multiple cycles of [2Fe2S] cluster formation and transfer are observed, suggesting that IscA acts catalytically. Recruits intracellular free iron so as to provide iron for the assembly of transient iron-sulfur cluster in IscU in the presence of IscS, L-cysteine and the thioredoxin reductase system TrxA/TrxB. This Proteus mirabilis (strain HI4320) protein is Iron-binding protein IscA.